The primary structure comprises 98 residues: Large ribosomal subunit protein uL23 (98 aa).

The protein belongs to the universal ribosomal protein uL23 family. Part of the 50S ribosomal subunit. Contacts protein L29, and trigger factor when it is bound to the ribosome.

Functionally, one of the early assembly proteins it binds 23S rRNA. One of the proteins that surrounds the polypeptide exit tunnel on the outside of the ribosome. Forms the main docking site for trigger factor binding to the ribosome. This chain is Large ribosomal subunit protein uL23, found in Thioalkalivibrio sulfidiphilus (strain HL-EbGR7).